We begin with the raw amino-acid sequence, 701 residues long: Elongation factor G (701 aa).

A tr-type G domain is found at 10-290 (AKVRNIGIMA…AVVDYLPSPL (281 aa)). GTP-binding positions include 19–26 (AHIDAGKT), 83–87 (DTPGH), and 137–140 (NKMD).

This sequence belongs to the TRAFAC class translation factor GTPase superfamily. Classic translation factor GTPase family. EF-G/EF-2 subfamily.

It is found in the cytoplasm. Its function is as follows. Catalyzes the GTP-dependent ribosomal translocation step during translation elongation. During this step, the ribosome changes from the pre-translocational (PRE) to the post-translocational (POST) state as the newly formed A-site-bound peptidyl-tRNA and P-site-bound deacylated tRNA move to the P and E sites, respectively. Catalyzes the coordinated movement of the two tRNA molecules, the mRNA and conformational changes in the ribosome. The sequence is that of Elongation factor G from Tropheryma whipplei (strain TW08/27) (Whipple's bacillus).